The following is a 959-amino-acid chain: Bifunctional premutilin synthase (959 aa).

Residues 1–542 are class II diterpene cyclase; that stretch reads MGLSEDLHAR…ALNVPIPRFD (542 aa). The DXDD motif signature appears at 309–312; it reads DADM. Aspartate 311 (for class II diterpene cyclase activity) is an active-site residue. The segment at 543-959 is class I diterpene synthase; it reads PASITTLPPI…TANGSNGIHH (417 aa). The For class I diterpene synthase activity role is filled by aspartate 649. Positions 649, 653, and 824 each coordinate Mg(2+). Positions 649 to 653 match the DDXXD motif motif; sequence DDYLD. Residues 931 to 959 form a disordered region; that stretch reads KGANGVKKTNGLTTNGTKATANGSNGIHH. The segment covering 934 to 959 has biased composition (low complexity); that stretch reads NGVKKTNGLTTNGTKATANGSNGIHH.

It belongs to the terpene synthase family. Requires Mg(2+) as cofactor.

Its pathway is secondary metabolite biosynthesis; terpenoid biosynthesis. Functionally, bifunctional premutilin synthase; part of the gene cluster that mediates the biosynthesis of pleuromutilin, a tricyclic diterpene showing antibacterial properties. The geranylgeranyl diphosphate (GGPP) synthase ple4 catalyzes the first step in pleuromutilin biosynthesis. GGPP is then substrate of the premutilin synthase (PS) ple3 to yield premutilin. Premutilin synthase is a bifunctional enzyme composed of the fusion of a class II diterpene cyclase (DTC) and a class I diterpene synthase (DTS), with the corresponding domains and active sites containing characteristic aspartate-rich motifs. GGPP is first converted to mutildienyl-diphosphate (MPP) at the class II DTC site. MPP is subsequently further cyclized at the class I DTS site, followed by a 1,5-hydride shift and addition of water prior to terminating deprotonation, to yield premutilin. The cytochrome P450 monooxygenases ple5 and ple6 hydroxylate premutilin at C-11 and C-3, respectively, producing 11-hydroxypremutilin and 3-hydroxypremutilin. The combination of the actions of both ple5 and ple6 leads to the production of 3,11-dihydroxypremutilin. The short chain dehydrogenase ple7 further converts 3,11-dihydroxypremutilin into mutilin. The acetyltransferase ple2 then acetylates mutilin to produce 14-O-acetylmutilin. Finally, the cytochrome P450 monooxygenase ple1 catalyzes hydroxylation on the alpha position of the acetyl side chain of 14-O-acetylmutilin to yield pleuromutilin. The sequence is that of Bifunctional premutilin synthase from Rhodocybe pseudopiperita (Clitopilus pseudopiperitus).